The sequence spans 252 residues: Hydroxyacylglutathione hydrolase (252 aa).

Residues His-54, His-56, Asp-58, His-59, His-111, Asp-128, and His-166 each contribute to the Zn(2+) site.

The protein belongs to the metallo-beta-lactamase superfamily. Glyoxalase II family. Monomer. Zn(2+) serves as cofactor.

It carries out the reaction an S-(2-hydroxyacyl)glutathione + H2O = a 2-hydroxy carboxylate + glutathione + H(+). It functions in the pathway secondary metabolite metabolism; methylglyoxal degradation; (R)-lactate from methylglyoxal: step 2/2. In terms of biological role, thiolesterase that catalyzes the hydrolysis of S-D-lactoyl-glutathione to form glutathione and D-lactic acid. The polypeptide is Hydroxyacylglutathione hydrolase (Aliivibrio fischeri (strain MJ11) (Vibrio fischeri)).